Here is a 213-residue protein sequence, read N- to C-terminus: Putative manganese efflux pump MntP (213 aa).

Transmembrane regions (helical) follow at residues 3–23 (ILSI…VSVA), 36–56 (ALKV…IGWG), 67–87 (AFDH…MIFE), 130–150 (LAIA…FLGI), 152–172 (IVQT…LGVI), and 187–207 (IVGG…HTGI).

Belongs to the MntP (TC 9.B.29) family.

The protein resides in the cell membrane. Its function is as follows. Probably functions as a manganese efflux pump. This is Putative manganese efflux pump MntP from Clostridium perfringens (strain ATCC 13124 / DSM 756 / JCM 1290 / NCIMB 6125 / NCTC 8237 / Type A).